We begin with the raw amino-acid sequence, 402 residues long: DTVTSPDITAIVAVIGAVVLGLTSLTIIILFGFVWHQRWKSRKPASTGQIVLVKEDKELAQLRGMAETVGLANACYAVSTLPSQAEIESLPAFPRDKLNLHKLLGSGAFGEVYEGTALDILADGSGESRVAVKTLKRGATDQEKSEFLKEAHLMSKFDHPHILKLLGVCLLNEPQYLILELMEGGDLLSYLRGARKQKFQSPLLTLTDLLDICLDICKGCVYLEKMRFIHRDLAARNCLVSEKQYGSCSRVVKIGDFGLARDIYKNDYYRKRGEGLLPVRWMAPESLIDGVFTNHSDVWAFGVLVWETLTLGQQPYPGLSNIEVLHHVRSGGRLESPNNCPDDIRDLMTRCWAQDPHNRPTFFYIQHKLQEIRHSPLCFSYFLGDKESVAPLRIQTAFFQPL.

One can recognise a Protein kinase domain in the interval 98-377 (LNLHKLLGSG…KLQEIRHSPL (280 aa)). Residues 104–112 (LGSGAFGEV) and Lys133 contribute to the ATP site. Asp232 (proton acceptor) is an active-site residue. Tyr268 bears the Phosphotyrosine; by autocatalysis mark.

This sequence belongs to the protein kinase superfamily. Tyr protein kinase family. Insulin receptor subfamily.

It carries out the reaction L-tyrosyl-[protein] + ATP = O-phospho-L-tyrosyl-[protein] + ADP + H(+). The polypeptide is Tyrosine-protein kinase transforming protein ros (V-ROS) (Galliformes (UR2SV)).